The sequence spans 932 residues: Phosphoenolpyruvate carboxylase (932 aa).

Residues H164 and K594 contribute to the active site.

It belongs to the PEPCase type 1 family. The cofactor is Mg(2+).

The enzyme catalyses oxaloacetate + phosphate = phosphoenolpyruvate + hydrogencarbonate. Forms oxaloacetate, a four-carbon dicarboxylic acid source for the tricarboxylic acid cycle. The sequence is that of Phosphoenolpyruvate carboxylase from Bradyrhizobium diazoefficiens (strain JCM 10833 / BCRC 13528 / IAM 13628 / NBRC 14792 / USDA 110).